A 577-amino-acid polypeptide reads, in one-letter code: Arginine--tRNA ligase (577 aa).

A 'HIGH' region motif is present at residues 122–132 (PNVAKEMHVGH).

Belongs to the class-I aminoacyl-tRNA synthetase family. In terms of assembly, monomer.

The protein localises to the cytoplasm. It carries out the reaction tRNA(Arg) + L-arginine + ATP = L-arginyl-tRNA(Arg) + AMP + diphosphate. The sequence is that of Arginine--tRNA ligase from Aliivibrio fischeri (strain ATCC 700601 / ES114) (Vibrio fischeri).